We begin with the raw amino-acid sequence, 148 residues long: Macrodomain Ter protein (148 aa).

This sequence belongs to the MatP family. Homodimer.

The protein localises to the cytoplasm. Functionally, required for spatial organization of the terminus region of the chromosome (Ter macrodomain) during the cell cycle. Prevents early segregation of duplicated Ter macrodomains during cell division. Binds specifically to matS, which is a 13 bp signature motif repeated within the Ter macrodomain. The sequence is that of Macrodomain Ter protein from Haemophilus influenzae (strain ATCC 51907 / DSM 11121 / KW20 / Rd).